Reading from the N-terminus, the 216-residue chain is GTP cyclohydrolase 1 2 (216 aa).

The protein belongs to the GTP cyclohydrolase I family. As to quaternary structure, homomer.

The enzyme catalyses GTP + H2O = 7,8-dihydroneopterin 3'-triphosphate + formate + H(+). The protein operates within cofactor biosynthesis; 7,8-dihydroneopterin triphosphate biosynthesis; 7,8-dihydroneopterin triphosphate from GTP: step 1/1. This is GTP cyclohydrolase 1 2 (folE2) from Nostoc sp. (strain PCC 7120 / SAG 25.82 / UTEX 2576).